The primary structure comprises 206 residues: Large ribosomal subunit protein uL4 (206 aa).

The disordered stretch occupies residues 65–85 (KQKGSGGARHGDRKAPQFRGG).

This sequence belongs to the universal ribosomal protein uL4 family. In terms of assembly, part of the 50S ribosomal subunit.

Functionally, one of the primary rRNA binding proteins, this protein initially binds near the 5'-end of the 23S rRNA. It is important during the early stages of 50S assembly. It makes multiple contacts with different domains of the 23S rRNA in the assembled 50S subunit and ribosome. In terms of biological role, forms part of the polypeptide exit tunnel. The protein is Large ribosomal subunit protein uL4 of Parvibaculum lavamentivorans (strain DS-1 / DSM 13023 / NCIMB 13966).